Reading from the N-terminus, the 647-residue chain is Acetyl-coenzyme A synthetase (647 aa).

CoA is bound by residues 190-193 and Thr-310; that span reads RGGR. Residues 386–388, 410–415, Asp-499, and Arg-514 contribute to the ATP site; these read GEP and DTWWQT. Ser-522 serves as a coordination point for CoA. Arg-525 provides a ligand contact to ATP. The Mg(2+) site is built by Val-536, His-538, and Val-541. Arg-583 is a CoA binding site. Lys-608 is modified (N6-acetyllysine).

Belongs to the ATP-dependent AMP-binding enzyme family. The cofactor is Mg(2+). Acetylated. Deacetylation by the SIR2-homolog deacetylase activates the enzyme.

It carries out the reaction acetate + ATP + CoA = acetyl-CoA + AMP + diphosphate. In terms of biological role, catalyzes the conversion of acetate into acetyl-CoA (AcCoA), an essential intermediate at the junction of anabolic and catabolic pathways. AcsA undergoes a two-step reaction. In the first half reaction, AcsA combines acetate with ATP to form acetyl-adenylate (AcAMP) intermediate. In the second half reaction, it can then transfer the acetyl group from AcAMP to the sulfhydryl group of CoA, forming the product AcCoA. The polypeptide is Acetyl-coenzyme A synthetase (Xylella fastidiosa (strain Temecula1 / ATCC 700964)).